The sequence spans 50 residues: Peroxiredoxin-6 (50 aa).

A Thioredoxin domain is found at 1–50 (DFTPVCTTELGRLAPEFAKRVVFIFGPDKKLKLSILYPATTGRNFDEILR). Phosphothreonine is present on T3. Residue C6 is the Cysteine sulfenic acid (-SOH) intermediate; for peroxidase activity of the active site. K19 carries the N6-acetyllysine modification. The For phospholipase activity role is filled by D28.

Belongs to the peroxiredoxin family. Prx6 subfamily. Homodimer. Interacts with GSTP1; mediates PRDX6 glutathionylation and regeneration. Interacts with APEX1. Interacts with STH. May interact with FAM168B. May interact with HTR2A. Post-translationally, irreversibly inactivated by overoxidation of Cys-6 to sulfinic acid (Cys-SO(2)H) and sulfonic acid (Cys-SO(3)H) forms upon oxidative stress. Phosphorylation at Thr-177 by MAP kinases increases the phospholipase activity of the enzyme. The phosphorylated form exhibits a greater lysophosphatidylcholine acyltransferase activity compared to the non-phosphorylated form.

The protein resides in the cytoplasm. Its subcellular location is the lysosome. It catalyses the reaction a hydroperoxide + 2 glutathione = an alcohol + glutathione disulfide + H2O. It carries out the reaction a 1,2-diacyl-sn-glycero-3-phosphocholine + H2O = a 1-acyl-sn-glycero-3-phosphocholine + a fatty acid + H(+). The enzyme catalyses a 1-acyl-sn-glycero-3-phosphocholine + an acyl-CoA = a 1,2-diacyl-sn-glycero-3-phosphocholine + CoA. The catalysed reaction is 1-hexadecanoyl-sn-glycero-3-phosphocholine + hexadecanoyl-CoA = 1,2-dihexadecanoyl-sn-glycero-3-phosphocholine + CoA. It catalyses the reaction 1,2-dihexadecanoyl-sn-glycero-3-phosphocholine + H2O = 1-hexadecanoyl-sn-glycero-3-phosphocholine + hexadecanoate + H(+). Its function is as follows. Thiol-specific peroxidase that catalyzes the reduction of hydrogen peroxide and organic hydroperoxides to water and alcohols, respectively. Can reduce H(2)O(2) and short chain organic, fatty acid, and phospholipid hydroperoxides. Also has phospholipase activity, and can therefore either reduce the oxidized sn-2 fatty acyl group of phospholipids (peroxidase activity) or hydrolyze the sn-2 ester bond of phospholipids (phospholipase activity). These activities are dependent on binding to phospholipids at acidic pH and to oxidized phospholipds at cytosolic pH. Plays a role in cell protection against oxidative stress by detoxifying peroxides and in phospholipid homeostasis. Exhibits acyl-CoA-dependent lysophospholipid acyltransferase which mediates the conversion of lysophosphatidylcholine (1-acyl-sn-glycero-3-phosphocholine or LPC) into phosphatidylcholine (1,2-diacyl-sn-glycero-3-phosphocholine or PC). Shows a clear preference for LPC as the lysophospholipid and for palmitoyl CoA as the fatty acyl substrate. The chain is Peroxiredoxin-6 from Mesocricetus auratus (Golden hamster).